A 239-amino-acid chain; its full sequence is Leucyl/phenylalanyl-tRNA--protein transferase (239 aa).

It belongs to the L/F-transferase family.

The protein localises to the cytoplasm. It carries out the reaction N-terminal L-lysyl-[protein] + L-leucyl-tRNA(Leu) = N-terminal L-leucyl-L-lysyl-[protein] + tRNA(Leu) + H(+). The catalysed reaction is N-terminal L-arginyl-[protein] + L-leucyl-tRNA(Leu) = N-terminal L-leucyl-L-arginyl-[protein] + tRNA(Leu) + H(+). The enzyme catalyses L-phenylalanyl-tRNA(Phe) + an N-terminal L-alpha-aminoacyl-[protein] = an N-terminal L-phenylalanyl-L-alpha-aminoacyl-[protein] + tRNA(Phe). In terms of biological role, functions in the N-end rule pathway of protein degradation where it conjugates Leu, Phe and, less efficiently, Met from aminoacyl-tRNAs to the N-termini of proteins containing an N-terminal arginine or lysine. The protein is Leucyl/phenylalanyl-tRNA--protein transferase of Aliivibrio fischeri (strain MJ11) (Vibrio fischeri).